A 472-amino-acid polypeptide reads, in one-letter code: H(+)/Cl(-) exchange transporter ClcA (472 aa).

Over 1-32 the chain is Cytoplasmic; sequence MKAETPSFEAHQFVRVRRGDAVRRLIQRDKTP. The chain crosses the membrane as a helical span at residues 33–69; that stretch reads LAVLFMAAVVGTLAGLVGVAFEKSVNWVQNQRIGALA. The Periplasmic segment spans residues 70 to 76; that stretch reads QVADHWY. The helical transmembrane segment at 77–100 threads the bilayer; that stretch reads LVWPLAFILSALLAMVGYFLVRRF. The short motif at 106-110 is the Selectivity filter part_1 element; that stretch reads GSGIP. S107 contributes to the chloride binding site. Residues 109-116 constitute an intramembrane region (helical); that stretch reads IPEIEGAL. Over 117–123 the chain is Cytoplasmic; that stretch reads EELRPVR. A run of 2 helical transmembrane segments spans residues 124-141 and 148-166; these read WWRVLPVKFVGGMGTLGA and EGPMVQLGGNIGRMVLDVF. The Selectivity filter part_2 motif lies at 146–150; sequence GREGP. Topologically, residues 167–176 are cytoplasmic; sequence RMRSPEARHT. 2 intramembrane regions (helical) span residues 177-189 and 193-201; these read LLATGAASGLSAA and PLAGILFII. Residues 202–214 are Cytoplasmic-facing; it reads EEMRPQFRYNLIS. The helical transmembrane segment at 215 to 232 threads the bilayer; it reads IKAVFTGVIMSSIVFRIF. The Periplasmic segment spans residues 233–252; that stretch reads NGEAAIIEVGKLSNAPVNTL. A helical transmembrane segment spans residues 253 to 281; it reads WLYLVLGMLFGCFGPLFNFLVLRTQDLFQ. The Cytoplasmic portion of the chain corresponds to 282–287; the sequence is RIHGGN. Residues 288-309 form a helical membrane-spanning segment; sequence IKKWVLIGGLIGGLCGLLGLMQ. Topologically, residues 310 to 329 are periplasmic; the sequence is PSAVGGGFNLIPIAAAGNFS. 2 consecutive transmembrane segments (helical) span residues 330-349 and 355-376; these read VGLLLFIFIARVVTTLICFS and GIFAPMLALGTLLGTAFGMAAI. Residues 355–359 carry the Selectivity filter part_3 motif; that stretch reads GIFAP. Positions 356 and 357 each coordinate chloride. Topologically, residues 377-386 are periplasmic; the sequence is PLFPAYHLDA. The helical intramembrane region spans 387–401; that stretch reads GTFAIAGMGALLAAS. An intramembrane region (note=Loop between two helices) is located at residues 402–404; sequence VRA. An intramembrane region (helical) is located at residues 405-416; sequence PLTGIVLVLEMT. The note=Loop between two helices intramembrane region spans 417–421; that stretch reads DNYQL. Residues 422-438 form a helical membrane-spanning segment; the sequence is ILPMIITCLGATLLAQF. At 439–472 the chain is on the cytoplasmic side; it reads LGGKPLYSTILQRTLAKQEAEQAAKAQQAPRENT. Y445 serves as a coordination point for chloride.

This sequence belongs to the chloride channel (TC 2.A.49) family. ClcA subfamily. In terms of assembly, homodimer.

The protein localises to the cell inner membrane. The catalysed reaction is 2 chloride(in) + H(+)(out) = 2 chloride(out) + H(+)(in). Its function is as follows. Proton-coupled chloride transporter. Functions as antiport system and exchanges two chloride ions for 1 proton. Probably acts as an electrical shunt for an outwardly-directed proton pump that is linked to amino acid decarboxylation, as part of the extreme acid resistance (XAR) response. In Klebsiella pneumoniae subsp. pneumoniae (strain ATCC 700721 / MGH 78578), this protein is H(+)/Cl(-) exchange transporter ClcA.